A 633-amino-acid polypeptide reads, in one-letter code: MTDSKLRSADPELEHQTRQGLPSLVLAALGVVYGDIGTSPLYAFREALHATGGSGADRANVLGILSLIVWALTIVVTLKYVTFVLKADNRGEGGTLSLMTLAREGLTGRPKWVLVLGVIGASLFLGDAIITPAISVLSAVEGIEVVAPALSNWVVPITLTIIAVLFFVQRFGTSGVASVFGPVTALWFIVLGVSGAIHIFDDPSVLAAVNPVHALQYIANNIGSAIAVLGAVFLAVTGAEALYVDLGHFGRRPIVTAWFSLVFPSLLLNYFGQGAFVLANPEMAEHPFFSMHPEWARIPMVCLATAATVIASQAVISGAYSLVRQAMHLNLLPRLRILHTSETQSGQIFMPQVNNLLFIFVAALVLFFQNSSGLSAAYGIAVTGEMFITSILLFIVMRRIWSWKLTAALAVIVPITLIDAGFLAANIAKFAEGGWVPVAVASTMALIMQTWTAGRRLLAARTKADEIPLSAIIDNLARKKPPTVPGTAMFLTSDIEGAPTALLHSLKHYKVLHEQNVILSVVTSTTPFVPDDEKIFLESFNRHFSRLVITFGYMETPNIPRALVLARKLGLKFDIMSTSFFLSRRTILPSKKGGLPFWQDRLFISLAENASNATDYFGLPSGRVVELGLQTTI.

12 helical membrane-spanning segments follow: residues 24 to 44 (LVLA…LYAF), 61 to 81 (VLGI…LKYV), 114 to 134 (LVLG…TPAI), 148 to 168 (PALS…LFFV), 180 to 200 (FGPV…IHIF), 222 to 242 (IGSA…AEAL), 258 to 278 (WFSL…AFVL), 298 to 318 (IPMV…VISG), 348 to 368 (IFMP…VLFF), 377 to 397 (AYGI…FIVM), 405 to 425 (LTAA…FLAA), and 427 to 447 (IAKF…MALI).

It belongs to the HAK/KUP transporter (TC 2.A.72) family.

The protein resides in the cell inner membrane. It catalyses the reaction K(+)(in) + H(+)(in) = K(+)(out) + H(+)(out). Its function is as follows. Transport of potassium into the cell. Likely operates as a K(+):H(+) symporter. The sequence is that of Probable potassium transport system protein Kup 3 from Rhizobium johnstonii (strain DSM 114642 / LMG 32736 / 3841) (Rhizobium leguminosarum bv. viciae).